A 476-amino-acid chain; its full sequence is Lactate utilization protein B 1 (476 aa).

4Fe-4S ferredoxin-type domains lie at 301–331 and 350–379; these read GTEF…GHAY and YDEY…LHDL. [4Fe-4S] cluster is bound by residues cysteine 310, cysteine 313, cysteine 316, cysteine 320, cysteine 363, cysteine 366, and cysteine 370.

It belongs to the LutB/YkgF family.

Is involved in L-lactate degradation and allows cells to grow with lactate as the sole carbon source. Has probably a role as an electron transporter during oxidation of L-lactate. This Bacillus mycoides (strain KBAB4) (Bacillus weihenstephanensis) protein is Lactate utilization protein B 1.